Consider the following 100-residue polypeptide: Large ribosomal subunit protein bL27 (100 aa).

A propeptide spanning residues 1–9 (MLVMNLQLF) is cleaved from the precursor.

It belongs to the bacterial ribosomal protein bL27 family. The N-terminus is cleaved by ribosomal processing cysteine protease Prp.

The polypeptide is Large ribosomal subunit protein bL27 (Clostridium botulinum (strain 657 / Type Ba4)).